A 360-amino-acid polypeptide reads, in one-letter code: uncharacterized protein (360 aa).

Residues 1–33 form a disordered region; sequence MSGRRKGCSAATASSSSSSPPSRLPPLPGHARR.

The protein belongs to the herpesviridae US22 family.

This is an uncharacterized protein from Human cytomegalovirus (strain AD169) (HHV-5).